A 291-amino-acid polypeptide reads, in one-letter code: N-acetylmannosamine kinase (291 aa).

Residues 5–12 (AIDIGGTK) and 132–139 (GVGGGVVS) each bind ATP. Zn(2+)-binding residues include His-156, Cys-166, Cys-168, and Cys-173.

Belongs to the ROK (NagC/XylR) family. NanK subfamily. As to quaternary structure, homodimer.

The catalysed reaction is an N-acyl-D-mannosamine + ATP = an N-acyl-D-mannosamine 6-phosphate + ADP + H(+). It functions in the pathway amino-sugar metabolism; N-acetylneuraminate degradation; D-fructose 6-phosphate from N-acetylneuraminate: step 2/5. Its function is as follows. Catalyzes the phosphorylation of N-acetylmannosamine (ManNAc) to ManNAc-6-P. This is N-acetylmannosamine kinase from Escherichia coli (strain SMS-3-5 / SECEC).